We begin with the raw amino-acid sequence, 441 residues long: Xaa-Pro dipeptidase (441 aa).

Residues Asp244, Asp255, His336, Glu381, and Glu420 each contribute to the Mn(2+) site.

It belongs to the peptidase M24B family. Bacterial-type prolidase subfamily. Mn(2+) serves as cofactor.

The enzyme catalyses Xaa-L-Pro dipeptide + H2O = an L-alpha-amino acid + L-proline. Its function is as follows. Splits dipeptides with a prolyl residue in the C-terminal position. This is Xaa-Pro dipeptidase from Xanthomonas euvesicatoria pv. vesicatoria (strain 85-10) (Xanthomonas campestris pv. vesicatoria).